A 665-amino-acid chain; its full sequence is DNA ligase (665 aa).

NAD(+)-binding positions include 32–36 (DSEYD), 81–82 (SL), and Glu110. Residue Lys112 is the N6-AMP-lysine intermediate of the active site. NAD(+) is bound by residues Arg133, Glu167, Lys283, and Lys307. Residues Cys401, Cys404, Cys419, and Cys424 each contribute to the Zn(2+) site. Residues 586–665 (EGHPDFSGKT…AAFIEKQNGI (80 aa)) enclose the BRCT domain.

It belongs to the NAD-dependent DNA ligase family. LigA subfamily. It depends on Mg(2+) as a cofactor. Requires Mn(2+) as cofactor.

The catalysed reaction is NAD(+) + (deoxyribonucleotide)n-3'-hydroxyl + 5'-phospho-(deoxyribonucleotide)m = (deoxyribonucleotide)n+m + AMP + beta-nicotinamide D-nucleotide.. Functionally, DNA ligase that catalyzes the formation of phosphodiester linkages between 5'-phosphoryl and 3'-hydroxyl groups in double-stranded DNA using NAD as a coenzyme and as the energy source for the reaction. It is essential for DNA replication and repair of damaged DNA. The protein is DNA ligase of Staphylococcus epidermidis (strain ATCC 12228 / FDA PCI 1200).